A 92-amino-acid polypeptide reads, in one-letter code: UPF0298 protein BH2594 (92 aa).

It belongs to the UPF0298 family.

Its subcellular location is the cytoplasm. The sequence is that of UPF0298 protein BH2594 from Halalkalibacterium halodurans (strain ATCC BAA-125 / DSM 18197 / FERM 7344 / JCM 9153 / C-125) (Bacillus halodurans).